The sequence spans 157 residues: MRIGHGYDVHRFGEGDHITLGGVRIPHRFGLLAHSDGDVLLHALSDALLGAAALGDIGKHFPDTDPQFKGADSRALLRHVLAQVQAKGYVVGNVDATIVAQAPKMAPHIERMRALIAADLQVELDQVNVKATTTEKLGFTGREEGIAVHAVALLVRP.

2 residues coordinate a divalent metal cation: D8 and H10. 4-CDP-2-C-methyl-D-erythritol 2-phosphate-binding positions include 8 to 10 (DVH) and 34 to 35 (HS). Residue H42 coordinates a divalent metal cation. Residues 56–58 (DIG), 61–65 (FPDTD), 100–106 (AQAPKMA), 132–135 (TTTE), F139, and R142 each bind 4-CDP-2-C-methyl-D-erythritol 2-phosphate.

The protein belongs to the IspF family. Homotrimer. A divalent metal cation is required as a cofactor.

It catalyses the reaction 4-CDP-2-C-methyl-D-erythritol 2-phosphate = 2-C-methyl-D-erythritol 2,4-cyclic diphosphate + CMP. Its pathway is isoprenoid biosynthesis; isopentenyl diphosphate biosynthesis via DXP pathway; isopentenyl diphosphate from 1-deoxy-D-xylulose 5-phosphate: step 4/6. In terms of biological role, involved in the biosynthesis of isopentenyl diphosphate (IPP) and dimethylallyl diphosphate (DMAPP), two major building blocks of isoprenoid compounds. Catalyzes the conversion of 4-diphosphocytidyl-2-C-methyl-D-erythritol 2-phosphate (CDP-ME2P) to 2-C-methyl-D-erythritol 2,4-cyclodiphosphate (ME-CPP) with a corresponding release of cytidine 5-monophosphate (CMP). The sequence is that of 2-C-methyl-D-erythritol 2,4-cyclodiphosphate synthase from Stutzerimonas stutzeri (strain A1501) (Pseudomonas stutzeri).